The following is a 247-amino-acid chain: tRNA1(Val) (adenine(37)-N6)-methyltransferase (247 aa).

It belongs to the methyltransferase superfamily. tRNA (adenine-N(6)-)-methyltransferase family.

It localises to the cytoplasm. The enzyme catalyses adenosine(37) in tRNA1(Val) + S-adenosyl-L-methionine = N(6)-methyladenosine(37) in tRNA1(Val) + S-adenosyl-L-homocysteine + H(+). Functionally, specifically methylates the adenine in position 37 of tRNA(1)(Val) (anticodon cmo5UAC). This Edwardsiella ictaluri (strain 93-146) protein is tRNA1(Val) (adenine(37)-N6)-methyltransferase.